Consider the following 368-residue polypeptide: Chaperone protein DnaJ (368 aa).

Residues 5-70 (DYYQVLGVPR…KKRKLYDTHG (66 aa)) form the J domain. Residues 124 to 201 (GVERQIQIPT…CNGAGRVEDH (78 aa)) form a CR-type zinc finger. The Zn(2+) site is built by Cys137, Cys140, Cys153, Cys156, Cys175, Cys178, Cys189, and Cys192. CXXCXGXG motif repeat units lie at residues 137 to 144 (CTHCHGSG), 153 to 160 (CGTCRGSG), 175 to 182 (CPHCGGRG), and 189 to 196 (CKVCNGAG).

Belongs to the DnaJ family. As to quaternary structure, homodimer. It depends on Zn(2+) as a cofactor.

It is found in the cytoplasm. Functionally, participates actively in the response to hyperosmotic and heat shock by preventing the aggregation of stress-denatured proteins and by disaggregating proteins, also in an autonomous, DnaK-independent fashion. Unfolded proteins bind initially to DnaJ; upon interaction with the DnaJ-bound protein, DnaK hydrolyzes its bound ATP, resulting in the formation of a stable complex. GrpE releases ADP from DnaK; ATP binding to DnaK triggers the release of the substrate protein, thus completing the reaction cycle. Several rounds of ATP-dependent interactions between DnaJ, DnaK and GrpE are required for fully efficient folding. Also involved, together with DnaK and GrpE, in the DNA replication of plasmids through activation of initiation proteins. This chain is Chaperone protein DnaJ, found in Xylella fastidiosa (strain M23).